We begin with the raw amino-acid sequence, 100 residues long: Aspartyl/glutamyl-tRNA(Asn/Gln) amidotransferase subunit C (100 aa).

Belongs to the GatC family. In terms of assembly, heterotrimer of A, B and C subunits.

The enzyme catalyses L-glutamyl-tRNA(Gln) + L-glutamine + ATP + H2O = L-glutaminyl-tRNA(Gln) + L-glutamate + ADP + phosphate + H(+). The catalysed reaction is L-aspartyl-tRNA(Asn) + L-glutamine + ATP + H2O = L-asparaginyl-tRNA(Asn) + L-glutamate + ADP + phosphate + 2 H(+). Allows the formation of correctly charged Asn-tRNA(Asn) or Gln-tRNA(Gln) through the transamidation of misacylated Asp-tRNA(Asn) or Glu-tRNA(Gln) in organisms which lack either or both of asparaginyl-tRNA or glutaminyl-tRNA synthetases. The reaction takes place in the presence of glutamine and ATP through an activated phospho-Asp-tRNA(Asn) or phospho-Glu-tRNA(Gln). This is Aspartyl/glutamyl-tRNA(Asn/Gln) amidotransferase subunit C from Streptococcus pneumoniae (strain P1031).